The primary structure comprises 156 residues: Small ribosomal subunit protein uS7 (156 aa).

The protein belongs to the universal ribosomal protein uS7 family. As to quaternary structure, part of the 30S ribosomal subunit. Contacts proteins S9 and S11.

One of the primary rRNA binding proteins, it binds directly to 16S rRNA where it nucleates assembly of the head domain of the 30S subunit. Is located at the subunit interface close to the decoding center, probably blocks exit of the E-site tRNA. The protein is Small ribosomal subunit protein uS7 of Syntrophotalea carbinolica (strain DSM 2380 / NBRC 103641 / GraBd1) (Pelobacter carbinolicus).